We begin with the raw amino-acid sequence, 480 residues long: Glutarate-semialdehyde dehydrogenase (480 aa).

NADP(+) is bound by residues Trp-156–Asn-157, Lys-180–Ser-183, and Gly-233–Ser-234. The active-site Proton acceptor is the Glu-255. Residue Leu-256 participates in NADP(+) binding. Cys-289 (nucleophile) is an active-site residue. Glu-384 is a binding site for NADP(+).

Belongs to the aldehyde dehydrogenase family.

It carries out the reaction 5-oxopentanoate + NADP(+) + H2O = glutarate + NADPH + 2 H(+). Its pathway is amino-acid degradation. Functionally, catalyzes the conversion of 5-oxopentanoate (glutarate semialdehyde) to glutarate. Involved in L-lysine degradation. This Pseudomonas putida (strain ATCC 47054 / DSM 6125 / CFBP 8728 / NCIMB 11950 / KT2440) protein is Glutarate-semialdehyde dehydrogenase.